The following is a 480-amino-acid chain: UDP-N-acetylmuramate--L-alanine ligase (480 aa).

ATP is bound at residue 126–132; that stretch reads GTHGKTT.

This sequence belongs to the MurCDEF family.

Its subcellular location is the cytoplasm. The enzyme catalyses UDP-N-acetyl-alpha-D-muramate + L-alanine + ATP = UDP-N-acetyl-alpha-D-muramoyl-L-alanine + ADP + phosphate + H(+). It functions in the pathway cell wall biogenesis; peptidoglycan biosynthesis. Functionally, cell wall formation. This is UDP-N-acetylmuramate--L-alanine ligase from Blochmanniella pennsylvanica (strain BPEN).